Consider the following 118-residue polypeptide: UPF0102 protein lpg2994 (118 aa).

It belongs to the UPF0102 family.

The polypeptide is UPF0102 protein lpg2994 (Legionella pneumophila subsp. pneumophila (strain Philadelphia 1 / ATCC 33152 / DSM 7513)).